A 521-amino-acid chain; its full sequence is Protein nucleotidyltransferase YdiU (521 aa).

Residues glycine 109, glycine 111, arginine 112, lysine 131, aspartate 143, glycine 144, arginine 194, and arginine 201 each coordinate ATP. Aspartate 270 acts as the Proton acceptor in catalysis. 2 residues coordinate Mg(2+): asparagine 271 and aspartate 280. ATP is bound at residue aspartate 280.

The protein belongs to the SELO family. Requires Mg(2+) as cofactor. Mn(2+) is required as a cofactor.

It carries out the reaction L-seryl-[protein] + ATP = 3-O-(5'-adenylyl)-L-seryl-[protein] + diphosphate. The enzyme catalyses L-threonyl-[protein] + ATP = 3-O-(5'-adenylyl)-L-threonyl-[protein] + diphosphate. It catalyses the reaction L-tyrosyl-[protein] + ATP = O-(5'-adenylyl)-L-tyrosyl-[protein] + diphosphate. The catalysed reaction is L-histidyl-[protein] + UTP = N(tele)-(5'-uridylyl)-L-histidyl-[protein] + diphosphate. It carries out the reaction L-seryl-[protein] + UTP = O-(5'-uridylyl)-L-seryl-[protein] + diphosphate. The enzyme catalyses L-tyrosyl-[protein] + UTP = O-(5'-uridylyl)-L-tyrosyl-[protein] + diphosphate. In terms of biological role, nucleotidyltransferase involved in the post-translational modification of proteins. It can catalyze the addition of adenosine monophosphate (AMP) or uridine monophosphate (UMP) to a protein, resulting in modifications known as AMPylation and UMPylation. The protein is Protein nucleotidyltransferase YdiU of Burkholderia pseudomallei (strain 1106a).